A 238-amino-acid chain; its full sequence is Ribosomal RNA small subunit methyltransferase G (238 aa).

S-adenosyl-L-methionine-binding positions include Gly-77, Phe-82, 128 to 129 (AE), and Arg-146. A disordered region spans residues 216–238 (KKRQTPKKYPRKPGTPNKEPLLK).

It belongs to the methyltransferase superfamily. RNA methyltransferase RsmG family.

It localises to the cytoplasm. Functionally, specifically methylates the N7 position of guanine in position 535 of 16S rRNA. The polypeptide is Ribosomal RNA small subunit methyltransferase G (Macrococcus caseolyticus (strain JCSC5402) (Macrococcoides caseolyticum)).